Consider the following 361-residue polypeptide: Transcription factor Sox-18B (361 aa).

A disordered region spans residues 17–65 (VNSTWVPPADTVPEASLTPHSPPAPDSPAPSPKPGYGYSACEEKPGDPR). Residues 36–49 (HSPPAPDSPAPSPK) show a composition bias toward pro residues. Residues 66 to 134 (IRRPMNAFMV…QHLQDHPNYK (69 aa)) constitute a DNA-binding region (HMG box). Interaction with DNA regions lie at residues 68-81 (RPMN…KDER) and 92-104 (HNAV…GQSW). A disordered region spans residues 127-163 (LQDHPNYKYRPRRKKQAKKLKRMDPSHHLRNEGYTGG). A compositionally biased stretch (basic residues) spans 133–147 (YKYRPRRKKQAKKLK). The interval 147–208 (KRMDPSHHLR…VLEPSEPAFF (62 aa)) is important for transcriptional activation. Basic and acidic residues predominate over residues 148–157 (RMDPSHHLRN). Positions 234 to 360 (KTLREISLPY…TAMYYTPCIT (127 aa)) constitute a Sox C-terminal domain. Positions 306-314 (NEFDQYLNM) match the 9aaTAD motif.

Expressed in the adult spleen, lung, heart and kidney, and at a lower level in the adult testis, liver and brain.

It localises to the nucleus. Transcription factor. Binds to the consensus DNA sequence 5'-AACAAT-3'. Also binds 5'-CACAAT-3' and 5'-AATAAT-3' but with a lower affinity. Acts partially redundantly with sox7 during cardiogenesis, acting indirectly through nodal-signaling to induce mesodermal, organizer and endodermal tissues, which then interact to initiate cardiogenesis. Also acts as an antagonist of beta-catenin signaling. This Xenopus laevis (African clawed frog) protein is Transcription factor Sox-18B (sox18-b).